We begin with the raw amino-acid sequence, 574 residues long: Septation ring formation regulator EzrA (574 aa).

The Extracellular portion of the chain corresponds to 1 to 7 (MSSGIVL). The helical transmembrane segment at 8–26 (LIVAIVLVVIIAYLIAIII) threads the bilayer. The Cytoplasmic segment spans residues 27–574 (RKRNDSLITK…YEKTRETIRF (548 aa)). Coiled coils occupy residues 102-141 (NFIRAHSQINNIESQLNLAEEDIKAIREALAVLKEQEEKN), 255-368 (KNIE…KDVL), and 409-495 (LKNI…EETA).

It belongs to the EzrA family.

The protein localises to the cell membrane. Negative regulator of FtsZ ring formation; modulates the frequency and position of FtsZ ring formation. Inhibits FtsZ ring formation at polar sites. Interacts either with FtsZ or with one of its binding partners to promote depolymerization. This chain is Septation ring formation regulator EzrA, found in Streptococcus mutans serotype c (strain ATCC 700610 / UA159).